The following is a 165-amino-acid chain: Large ribosomal subunit protein uL10 (165 aa).

The protein belongs to the universal ribosomal protein uL10 family. As to quaternary structure, part of the ribosomal stalk of the 50S ribosomal subunit. The N-terminus interacts with L11 and the large rRNA to form the base of the stalk. The C-terminus forms an elongated spine to which L12 dimers bind in a sequential fashion forming a multimeric L10(L12)X complex.

Forms part of the ribosomal stalk, playing a central role in the interaction of the ribosome with GTP-bound translation factors. This chain is Large ribosomal subunit protein uL10, found in Shewanella halifaxensis (strain HAW-EB4).